The primary structure comprises 419 residues: Adenylosuccinate synthetase 1 (419 aa).

Position 11–17 (11–17) interacts with GTP; sequence GDEGKGK. Catalysis depends on Asp12, which acts as the Proton acceptor. Residues Asp12 and Gly39 each contribute to the Mg(2+) site. Residues 12-15, 37-40, Arg138, Gln220, and Arg298 each bind IMP; these read DEGK and NAGH. Catalysis depends on His40, which acts as the Proton donor. 294–300 provides a ligand contact to substrate; the sequence is TVSKRPR. Residues Arg300, 326 to 328, and 407 to 409 contribute to the GTP site; these read NVD and SYG.

Belongs to the adenylosuccinate synthetase family. Homodimer. Mg(2+) serves as cofactor.

It is found in the cytoplasm. The enzyme catalyses IMP + L-aspartate + GTP = N(6)-(1,2-dicarboxyethyl)-AMP + GDP + phosphate + 2 H(+). Its pathway is purine metabolism; AMP biosynthesis via de novo pathway; AMP from IMP: step 1/2. In terms of biological role, plays an important role in the de novo pathway of purine nucleotide biosynthesis. Catalyzes the first committed step in the biosynthesis of AMP from IMP. This is Adenylosuccinate synthetase 1 from Photorhabdus laumondii subsp. laumondii (strain DSM 15139 / CIP 105565 / TT01) (Photorhabdus luminescens subsp. laumondii).